The primary structure comprises 296 residues: MIKQYLQVTKPGIIFGNLISVVGGFLLASKGSIDYPLFLATLVGVSLVVASGCVFNNYIDRDIDKKMERTKNRVLVKGLIAPSVSLVYATALGIAGFALLYIGANPLAMWLAVMGFVVYVGVYSLYMKRHSVYGTLIGSLSGAAPPVIGYCAVTNEFDAGALILLAIFSLWQMPHSYAIAIFRFKDYQAANIPVLPVVKGISVAKNHITVYIVAFMIATLMLTLGGYAGYKYLIVAAAVSVWWLGMALRGYKTENDSVWARKLFVFSIVAITSLSVMMSIDFSATAAPEALMTYVW.

Helical transmembrane passes span 8-28, 35-55, 84-104, 107-127, 132-152, 162-182, 208-228, 229-249, and 263-283; these read VTKP…FLLA, YPLF…GCVF, VSLV…YIGA, LAMW…SLYM, VYGT…GYCA, LILL…IAIF, ITVY…GGYA, GYKY…MALR, and LFVF…IDFS.

It belongs to the UbiA prenyltransferase family. Protoheme IX farnesyltransferase subfamily.

The protein resides in the cell inner membrane. The enzyme catalyses heme b + (2E,6E)-farnesyl diphosphate + H2O = Fe(II)-heme o + diphosphate. It functions in the pathway porphyrin-containing compound metabolism; heme O biosynthesis; heme O from protoheme: step 1/1. Functionally, converts heme B (protoheme IX) to heme O by substitution of the vinyl group on carbon 2 of heme B porphyrin ring with a hydroxyethyl farnesyl side group. The polypeptide is Protoheme IX farnesyltransferase (Serratia proteamaculans (strain 568)).